The following is a 397-amino-acid chain: Ribosomal RNA large subunit methyltransferase I (397 aa).

The 79-residue stretch at 2 to 80 (AIRIKLKPGR…KEETIDADFF (79 aa)) folds into the PUA domain.

Belongs to the methyltransferase superfamily. RlmI family.

It localises to the cytoplasm. The catalysed reaction is cytidine(1962) in 23S rRNA + S-adenosyl-L-methionine = 5-methylcytidine(1962) in 23S rRNA + S-adenosyl-L-homocysteine + H(+). Functionally, specifically methylates the cytosine at position 1962 (m5C1962) of 23S rRNA. The protein is Ribosomal RNA large subunit methyltransferase I of Shewanella frigidimarina (strain NCIMB 400).